The following is a 156-amino-acid chain: Lipoprotein signal peptidase (156 aa).

Transmembrane regions (helical) follow at residues 5–25, 64–84, and 89–109; these read FKFI…DQWV, YLHL…KTLL, and IAFG…FIYG. Active-site residues include D113 and D130. Residues 122-142 traverse the membrane as a helical segment; sequence NFAIFNVADVMINISVALILI.

It belongs to the peptidase A8 family.

The protein localises to the cell inner membrane. It catalyses the reaction Release of signal peptides from bacterial membrane prolipoproteins. Hydrolyzes -Xaa-Yaa-Zaa-|-(S,diacylglyceryl)Cys-, in which Xaa is hydrophobic (preferably Leu), and Yaa (Ala or Ser) and Zaa (Gly or Ala) have small, neutral side chains.. It participates in protein modification; lipoprotein biosynthesis (signal peptide cleavage). In terms of biological role, this protein specifically catalyzes the removal of signal peptides from prolipoproteins. This chain is Lipoprotein signal peptidase, found in Campylobacter jejuni subsp. doylei (strain ATCC BAA-1458 / RM4099 / 269.97).